Consider the following 354-residue polypeptide: Probable butyrate kinase 2 (354 aa).

It belongs to the acetokinase family.

The protein resides in the cytoplasm. It carries out the reaction butanoate + ATP = butanoyl phosphate + ADP. This is Probable butyrate kinase 2 from Caldanaerobacter subterraneus subsp. tengcongensis (strain DSM 15242 / JCM 11007 / NBRC 100824 / MB4) (Thermoanaerobacter tengcongensis).